Reading from the N-terminus, the 219-residue chain is DAN domain family member 5 (219 aa).

Residues 1 to 19 (MLLFRAASLLPLLCFTVGA) form the signal peptide. Intrachain disulfides connect C118-C165, C132-C179, C142-C195, and C146-C197. The region spanning 118–198 (CHALPFIQNV…VELVEECECE (81 aa)) is the CTCK domain.

Belongs to the DAN family. As to quaternary structure, interacts with nr1-a.

Its subcellular location is the secreted. In terms of biological role, plays an important role in regulating the left-right axis by blocking a tgfb1 cascade in the right posterior paraxial mesoderm. Functions as an inhibitor of bmp, tgfb1, nodal, activin and wnt signaling in the ectoderm. May inhibit mesodermal signals, probably through an inhibition of nodal/activin pathways. Seems to regulates cell fate specification and competence before the onset of neural induction. Expression in the entire ectodermal region prior to gastrulation might act to prevent fate specification in the ectoderm and ensure the maintenance of the stem-cell-like properties exhibited by ectodermal cells. The polypeptide is DAN domain family member 5 (dand5) (Xenopus tropicalis (Western clawed frog)).